A 385-amino-acid chain; its full sequence is UPF0284 protein P9301_04631 (385 aa).

Belongs to the UPF0284 family.

The chain is UPF0284 protein P9301_04631 from Prochlorococcus marinus (strain MIT 9301).